Here is a 341-residue protein sequence, read N- to C-terminus: Malate dehydrogenase 2, mitochondrial (341 aa).

Residues 1-22 (MFRSMIVRSASPVKQGLLRRGF) constitute a mitochondrion transit peptide. Residues 36–42 (GAAGGIG) and aspartate 62 each bind NAD(+). Positions 109 and 115 each coordinate substrate. NAD(+) contacts are provided by residues asparagine 122 and 145 to 147 (ISN). Asparagine 147 and arginine 181 together coordinate substrate. The active-site Proton acceptor is the histidine 205. Methionine 256 lines the NAD(+) pocket.

It belongs to the LDH/MDH superfamily. MDH type 1 family. Homodimer. Expressed in rosette leaves at low levels.

It is found in the mitochondrion matrix. The enzyme catalyses (S)-malate + NAD(+) = oxaloacetate + NADH + H(+). Catalyzes a reversible NAD-dependent dehydrogenase reaction involved in central metabolism and redox homeostasis between organelle compartments. Required for carbon dioxide and energy partitioning in leaves. May limit photorespiration during the dark phase. Can convert 2-ketoglutarate to L-2-hydroxyglutarate in vitro. This chain is Malate dehydrogenase 2, mitochondrial, found in Arabidopsis thaliana (Mouse-ear cress).